A 989-amino-acid polypeptide reads, in one-letter code: Serine-repeat antigen protein 5 (989 aa).

The signal sequence occupies residues Met1–Asn16. 2 disordered regions span residues Ser26–Asp91 and Leu165–Gln245. Composition is skewed to low complexity over residues Gln52–Ser87, Ser167–Thr180, and Ser191–Ser225. Ser167 bears the Phosphoserine mark. An N-linked (GlcNAc...) asparagine glycan is attached at Asn168. The segment at Ser208–Gln245 is interaction with PTKL. N-linked (GlcNAc...) asparagine glycosylation occurs at Asn310. Residues Tyr365 to Glu382 form an interaction with host VTN region. Cys437 and Cys489 are disulfide-bonded. Thr541 carries the post-translational modification Phosphothreonine. 5 disulfide bridges follow: Cys559-Cys564, Cys573-Cys602, Cys585-Cys628, Cys619-Cys664, and Cys747-Cys801. The segment at Asn571–Val989 is thiol-protease-like. Catalysis depends on residues His754 and Asn779. Residue Asn820 is glycosylated (N-linked (GlcNAc...) asparagine). A propeptide spans Lys835–Gln878 (inhibition peptide). Ser858 is modified (phosphoserine).

This sequence belongs to the peptidase C1 family. May interact (via C-terminus) with PTKL (via SAM domain). In terms of assembly, interacts (via C-terminus) with human VTN (via hemopexin repeat 2); may form heterotetramers of two VTN and SERA5 P47 heterodimers; the interaction may protect merozoites from phagocytosis by host monocytes; VTN glycosylation appears to be dispensable for the interaction. As to quaternary structure, monomer. Interacts with kinase CPK1/CDPK1 at the schizont stage. In terms of processing, phosphorylation by CPK1/CDPK1 increases SERA5 protease activity towards a synthetic peptide in vitro. Post-translationally, just prior to merozoite egress from host erythrocytes, proteolytically cleaved into multiple fragments. Cleaved by SUB1 into p47 and p73, p73 is further cleaved by SUB1 into p56 and p18 and p56 is further processed into p50 by an unidentified protease. p47 remains covalently associated with p18 via disulfide bond. p47 can be processed into p25n and p25c by SUB1. p25c and p25n remain associated with p18. Proteolytic processing is essential for merozoite egress from host erythrocytes. The cleavage of the propeptide to produce p50 is necessary for protease activity and to promote merozoite egress.

The protein resides in the parasitophorous vacuole. It localises to the secreted. It is found in the cell membrane. Plays an essential role during the asexual blood stage development by controlling the kinetics of merozoite egress from host erythrocytes. Specifically, prevents premature rupture of the parasitophorous vacuole and host erythrocyte membranes. Its function is as follows. May prevent merozoite phagocytosis by host monocytes via interaction with host VTN at the merozoite surface. Plays a role in parasite growth. Functionally, protease activity is controversial. The polypeptide is Serine-repeat antigen protein 5 (Plasmodium falciparum (isolate CDC / Honduras)).